The primary structure comprises 924 residues: DNA repair and recombination protein RDH54 (924 aa).

The segment covering 1 to 10 (MQIPKYENKP) has biased composition (basic and acidic residues). Disordered regions lie at residues 1–21 (MQIP…GSNK) and 155–183 (EALS…NDGG). Low complexity predominate over residues 168-178 (TTSTTETVPST). The region spanning 299–487 (LENDSDISGC…FTIIDFINPG (189 aa)) is the Helicase ATP-binding domain. An ATP-binding site is contributed by 346–353 (IPLTGLCK). The DEGH box motif lies at 472–475 (NDLN). Residue Lys-615 forms a Glycyl lysine isopeptide (Lys-Gly) (interchain with G-Cter in ubiquitin) linkage. One can recognise a Helicase C-terminal domain in the interval 631–790 (KLKVLMTLLE…DSEMRNKESS (160 aa)).

The protein belongs to the SNF2/RAD54 helicase family. As to quaternary structure, interacts with RAD51 and DMC1.

It is found in the nucleus. The enzyme catalyses ATP + H2O = ADP + phosphate + H(+). In terms of biological role, involved in the recombinational repair of double-strand breaks (DSB) in DNA during mitosis and meiosis. Has DNA dependent ATPase activity. Promotes D-loop (displacement loop) formation with RAD51 recombinase. Modifies the topology of double-stranded DNA during the D-loop reaction to facilitate the invasion of the homologous duplex molecule by the initiating single-stranded DNA substrate. Required for adaptation from G2/M checkpoint arrest induced by a double strand break, by participating in monitoring the extent of single-stranded DNA produced by resection of DNA ends. This role is distinct from its roles in recombination. Promotes colocalization of RAD51 and DMC1 during meiotic recombination. Involved in crossover interference. The polypeptide is DNA repair and recombination protein RDH54 (RDH54) (Saccharomyces cerevisiae (strain JAY291) (Baker's yeast)).